The sequence spans 24 residues: MQWTKPAFTDLRIGFEVTMYFEAR.

Residues 16–20 (EVTMY) constitute a cross-link (pyrroloquinoline quinone (Glu-Tyr)).

It belongs to the PqqA family.

Its pathway is cofactor biosynthesis; pyrroloquinoline quinone biosynthesis. Functionally, required for coenzyme pyrroloquinoline quinone (PQQ) biosynthesis. PQQ is probably formed by cross-linking a specific glutamate to a specific tyrosine residue and excising these residues from the peptide. The chain is Coenzyme PQQ synthesis protein A from Acinetobacter baumannii (strain SDF).